The chain runs to 452 residues: Exodeoxyribonuclease 7 large subunit (452 aa).

This sequence belongs to the XseA family. In terms of assembly, heterooligomer composed of large and small subunits.

It is found in the cytoplasm. It carries out the reaction Exonucleolytic cleavage in either 5'- to 3'- or 3'- to 5'-direction to yield nucleoside 5'-phosphates.. In terms of biological role, bidirectionally degrades single-stranded DNA into large acid-insoluble oligonucleotides, which are then degraded further into small acid-soluble oligonucleotides. This Lysinibacillus sphaericus (strain C3-41) protein is Exodeoxyribonuclease 7 large subunit.